We begin with the raw amino-acid sequence, 152 residues long: Transcriptional regulator MraZ (152 aa).

SpoVT-AbrB domains lie at 5–52 and 81–124; these read ATLV…PLPE and ASEC…DETT.

This sequence belongs to the MraZ family. As to quaternary structure, forms oligomers.

It localises to the cytoplasm. The protein localises to the nucleoid. In terms of biological role, negatively regulates its own expression and that of the subsequent genes in the proximal part of the division and cell wall (dcw) gene cluster. Acts by binding directly to DNA. May also regulate the expression of genes outside the dcw cluster. The polypeptide is Transcriptional regulator MraZ (Escherichia coli O45:K1 (strain S88 / ExPEC)).